The primary structure comprises 205 residues: GTP cyclohydrolase-2 (205 aa).

49–53 (RVHSE) lines the GTP pocket. 3 residues coordinate Zn(2+): cysteine 54, cysteine 65, and cysteine 67. Residues glutamine 70, 92-94 (EGR), and threonine 114 contribute to the GTP site. Aspartate 126 functions as the Proton acceptor in the catalytic mechanism. Residue arginine 128 is the Nucleophile of the active site. Residues threonine 149 and lysine 154 each contribute to the GTP site.

Belongs to the GTP cyclohydrolase II family. Zn(2+) serves as cofactor.

The catalysed reaction is GTP + 4 H2O = 2,5-diamino-6-hydroxy-4-(5-phosphoribosylamino)-pyrimidine + formate + 2 phosphate + 3 H(+). Its pathway is cofactor biosynthesis; riboflavin biosynthesis; 5-amino-6-(D-ribitylamino)uracil from GTP: step 1/4. In terms of biological role, catalyzes the conversion of GTP to 2,5-diamino-6-ribosylamino-4(3H)-pyrimidinone 5'-phosphate (DARP), formate and pyrophosphate. The protein is GTP cyclohydrolase-2 of Pseudomonas syringae pv. tomato (strain ATCC BAA-871 / DC3000).